A 476-amino-acid chain; its full sequence is Scopoletin glucosyltransferase (476 aa).

H16 (proton acceptor) is an active-site residue. H16 contributes to the an anthocyanidin binding site. Residue D119 is the Charge relay of the active site. Residues A343, Q345, H360, W363, N364, S365, and E368 each contribute to the UDP-alpha-D-glucose site. Residue A383 participates in an anthocyanidin binding. UDP-alpha-D-glucose contacts are provided by E384 and Q385.

It belongs to the UDP-glycosyltransferase family.

It carries out the reaction scopoletin + UDP-alpha-D-glucose = scopolin + UDP + H(+). In terms of biological role, glucosyltransferase acting preferentially on aromatic substrates of the phenylpropanoid types. The best substrates are scopoletin and esculetin. Required for full resistance to virus. This chain is Scopoletin glucosyltransferase (TOGT1), found in Nicotiana tabacum (Common tobacco).